The chain runs to 304 residues: uncharacterized protein (304 aa).

The span at 226–244 (SRNSESSRQSNLNSPNDSV) shows a compositional bias: polar residues. The disordered stretch occupies residues 226–263 (SRNSESSRQSNLNSPNDSVKFNEFNKSNKSTKTNPNNI). Over residues 246–262 (FNEFNKSNKSTKTNPNN) the composition is skewed to low complexity.

This is an uncharacterized protein from Acanthamoeba polyphaga (Amoeba).